The chain runs to 314 residues: TPR repeat-containing protein MJ1345 (314 aa).

TPR repeat units lie at residues 12–45 (ESILWDEYFDALEKRNYEKALLLIDKILEVRESP), 46–78 (DVYVRKARILRTLGENDKALEYFDKALKLKPKY), 80–112 (LANFLKGALLVSLGKLEEAKEVFLKLCRLEKSD), 114–146 (PVKYVTAFILKKLGEYDYALKIIDKILKKYPKS), 147–180 (AIAWAEKGEILYREGKLKKSLECFDNALKINPKD), 182–214 (QSLLYKGEILFKLGRYGEALKCLKKVFERNNKD), 215–248 (IRALMYIIQILIYLGRLNQALEYTKKALKLNPDD), 249–282 (PLLYLYKGIILNKLGKYNEAIKYFDKVLEINPNI), and 284–313 (DAWNGKAIALEKLGKINEAIECYNRALDIY).

The protein is TPR repeat-containing protein MJ1345 of Methanocaldococcus jannaschii (strain ATCC 43067 / DSM 2661 / JAL-1 / JCM 10045 / NBRC 100440) (Methanococcus jannaschii).